Reading from the N-terminus, the 83-residue chain is Cytotoxin homolog 5V (83 aa).

The first 21 residues, 1–21, serve as a signal peptide directing secretion; that stretch reads MKTLLLTLVVVTIVCLDLGYT. Intrachain disulfides connect cysteine 24/cysteine 43, cysteine 36/cysteine 61, cysteine 65/cysteine 76, and cysteine 77/cysteine 82.

This sequence belongs to the three-finger toxin family. Short-chain subfamily. Orphan group XV sub-subfamily. Expressed by the venom gland.

The protein localises to the secreted. The protein resides in the target cell membrane. In terms of biological role, has low cytotoxic activity. This chain is Cytotoxin homolog 5V, found in Naja atra (Chinese cobra).